Here is a 177-residue protein sequence, read N- to C-terminus: RNA polymerase sigma-E factor (177 aa).

The Polymerase core binding motif lies at 34 to 47; that stretch reads DLLQTALARTYGRW. A DNA-binding region (H-T-H motif) is located at residues 128–147; sequence TEETAAALGMSAGTVKSTLH.

It belongs to the sigma-70 factor family. ECF subfamily.

Its subcellular location is the cytoplasm. In terms of biological role, sigma factors are initiation factors that promote the attachment of RNA polymerase to specific initiation sites and are then released. This sigma factor is required for normal cell wall integrity; it is recruited by RNA polymerase to transcribe genes with cell wall-related functions. It is also involved in the transcription of the dagA gene coding for an extracellular agar-degrading enzyme. This chain is RNA polymerase sigma-E factor (sigE), found in Streptomyces coelicolor (strain ATCC BAA-471 / A3(2) / M145).